The following is a 1188-amino-acid chain: Oxysterol-binding protein homolog 1 (1188 aa).

ANK repeat units follow at residues 51-80 (VLHL…STTN), 96-125 (NGNT…INDC), and 196-225 (TGDT…DPFK). Residues 330–379 (MSSCSLHLDSSEKLKFEIIGGNNGVIRWHLKGNHPIETNRWVWAIQGAIR) form the PH domain. The residue at position 394 (Ser394) is a Phosphoserine. Disordered regions lie at residues 415–546 (ATSK…GDED) and 661–692 (QKKL…QEST). Over residues 424 to 433 (PHLSKSTLTQ) the composition is skewed to polar residues. Positions 443-462 (TNNNNNKSNNDYDDNNNNNN) are enriched in low complexity. The span at 463–473 (NDDDDYDDDDE) shows a compositional bias: acidic residues. Residues Ser490 and Ser500 each carry the phosphoserine modification. Over residues 514 to 529 (PSDDEGYSEDDSDDDG) the composition is skewed to acidic residues. Phosphoserine is present on residues Ser678, Ser683, and Ser691. A phosphothreonine mark is found at Thr692 and Thr694. Residues Ser708 and Ser712 each carry the phosphoserine modification. An FFAT motif is present at residues 716–722 (EFFDAEE). The segment at 721–755 (EEAASDKKANDSEDLTTNKETPANAKPQEEAPEDE) is disordered. The interval 800–1174 (LWSVLKSMVG…YWKFNGEYWN (375 aa)) is OSBP-related domain (ORD). Residues Asp834 and Lys962 each contribute to the ergosterol site.

This sequence belongs to the OSBP family. Interacts with NVJ1. Interacts with the AAA ATPase AFG2; regulates OSH1 membrane association. AFG2 is required for membrane dissociation of OSH1. Interacts with SCS2.

It localises to the golgi apparatus membrane. It is found in the nucleus outer membrane. Its subcellular location is the endoplasmic reticulum membrane. The protein resides in the vacuole membrane. Lipid transport protein (LTP) involved in non-vesicular transfer of lipids between membranes. Functions in phosphoinositide-coupled directional transport of various lipids by carrying the lipid molecule in a hydrophobic pocket and transferring it between membranes through the cytosol. Involved in maintenance of intracellular sterol distribution and homeostasis. Involved in non-vesicular transport of ergosterol and PI(4)P at the NVJ. Binds sterol and PI4P in a mutually exclusive manner. May be involved in formation of PMN vesicles by altering the membrane lipid composition. This Saccharomyces cerevisiae (strain ATCC 204508 / S288c) (Baker's yeast) protein is Oxysterol-binding protein homolog 1.